Here is a 456-residue protein sequence, read N- to C-terminus: tRNA modification GTPase MnmE (456 aa).

3 residues coordinate (6S)-5-formyl-5,6,7,8-tetrahydrofolate: R23, E85, and R124. Positions 220 to 375 (GLRVLIFGKP…LVSAIQERFV (156 aa)) constitute a TrmE-type G domain. N230 provides a ligand contact to K(+). Residues 230–235 (NVGKSS), 249–255 (TDIPGTT), and 274–277 (DTAG) each bind GTP. S234 provides a ligand contact to Mg(2+). The K(+) site is built by T249, I251, and T254. A Mg(2+)-binding site is contributed by T255. Position 456 (K456) interacts with (6S)-5-formyl-5,6,7,8-tetrahydrofolate.

It belongs to the TRAFAC class TrmE-Era-EngA-EngB-Septin-like GTPase superfamily. TrmE GTPase family. Homodimer. Heterotetramer of two MnmE and two MnmG subunits. The cofactor is K(+).

The protein resides in the cytoplasm. In terms of biological role, exhibits a very high intrinsic GTPase hydrolysis rate. Involved in the addition of a carboxymethylaminomethyl (cmnm) group at the wobble position (U34) of certain tRNAs, forming tRNA-cmnm(5)s(2)U34. This chain is tRNA modification GTPase MnmE, found in Syntrophotalea carbinolica (strain DSM 2380 / NBRC 103641 / GraBd1) (Pelobacter carbinolicus).